An 80-amino-acid polypeptide reads, in one-letter code: Exodeoxyribonuclease 7 small subunit (80 aa).

This sequence belongs to the XseB family. Heterooligomer composed of large and small subunits.

The protein localises to the cytoplasm. It catalyses the reaction Exonucleolytic cleavage in either 5'- to 3'- or 3'- to 5'-direction to yield nucleoside 5'-phosphates.. Its function is as follows. Bidirectionally degrades single-stranded DNA into large acid-insoluble oligonucleotides, which are then degraded further into small acid-soluble oligonucleotides. The protein is Exodeoxyribonuclease 7 small subunit of Maridesulfovibrio salexigens (strain ATCC 14822 / DSM 2638 / NCIMB 8403 / VKM B-1763) (Desulfovibrio salexigens).